The chain runs to 178 residues: ATP synthase subunit delta (178 aa).

This sequence belongs to the ATPase delta chain family. In terms of assembly, F-type ATPases have 2 components, F(1) - the catalytic core - and F(0) - the membrane proton channel. F(1) has five subunits: alpha(3), beta(3), gamma(1), delta(1), epsilon(1). F(0) has three main subunits: a(1), b(2) and c(10-14). The alpha and beta chains form an alternating ring which encloses part of the gamma chain. F(1) is attached to F(0) by a central stalk formed by the gamma and epsilon chains, while a peripheral stalk is formed by the delta and b chains.

Its subcellular location is the cell membrane. F(1)F(0) ATP synthase produces ATP from ADP in the presence of a proton or sodium gradient. F-type ATPases consist of two structural domains, F(1) containing the extramembraneous catalytic core and F(0) containing the membrane proton channel, linked together by a central stalk and a peripheral stalk. During catalysis, ATP synthesis in the catalytic domain of F(1) is coupled via a rotary mechanism of the central stalk subunits to proton translocation. In terms of biological role, this protein is part of the stalk that links CF(0) to CF(1). It either transmits conformational changes from CF(0) to CF(1) or is implicated in proton conduction. This Streptococcus pyogenes serotype M6 (strain ATCC BAA-946 / MGAS10394) protein is ATP synthase subunit delta.